Consider the following 570-residue polypeptide: Proline--tRNA ligase (570 aa).

Belongs to the class-II aminoacyl-tRNA synthetase family. ProS type 1 subfamily. In terms of assembly, homodimer.

It is found in the cytoplasm. It catalyses the reaction tRNA(Pro) + L-proline + ATP = L-prolyl-tRNA(Pro) + AMP + diphosphate. In terms of biological role, catalyzes the attachment of proline to tRNA(Pro) in a two-step reaction: proline is first activated by ATP to form Pro-AMP and then transferred to the acceptor end of tRNA(Pro). As ProRS can inadvertently accommodate and process non-cognate amino acids such as alanine and cysteine, to avoid such errors it has two additional distinct editing activities against alanine. One activity is designated as 'pretransfer' editing and involves the tRNA(Pro)-independent hydrolysis of activated Ala-AMP. The other activity is designated 'posttransfer' editing and involves deacylation of mischarged Ala-tRNA(Pro). The misacylated Cys-tRNA(Pro) is not edited by ProRS. The polypeptide is Proline--tRNA ligase (Neisseria gonorrhoeae (strain ATCC 700825 / FA 1090)).